Consider the following 325-residue polypeptide: MSWITPDLIEILLSILKAVVILLVVVTCGAFMSFGERRLLGLFQNRYGPNRVGWGGSLQLVADMIKMFFKEDWIPKFSDRVIFTLAPMIAFTSLLLAFAIVPVSPTWVVADLNIGILFFLMMAGLAVYAVLFAGWSSNNKYSLLGAMRASAQTLSYEVFLGLSLMGVVAQAGSFNMTDIVNNQADIWNVIPQFFGFVTFAIAGVAVCHRHPFDQPEAEQELADGYHIEYSGMKFGLFFVGEYIGIVTISALMVTLFFGGWHGPFLPPFIWFALKTAFFMMMFILIRASLPRPRYDQVMSFGWKVCLPLTLINLLVTAAVILWQAQ.

The next 9 helical transmembrane spans lie at 11–31, 50–69, 81–101, 114–134, 154–174, 186–206, 237–257, 265–285, and 304–324; these read ILLSILKAVVILLVVVTCGAF, NRVGWGGSLQLVADMIKMFF, VIFTLAPMIAFTSLLLAFAIV, IGILFFLMMAGLAVYAVLFAG, LSYEVFLGLSLMGVVAQAGSF, IWNVIPQFFGFVTFAIAGVAV, FFVGEYIGIVTISALMVTLFF, LPPFIWFALKTAFFMMMFILI, and VCLPLTLINLLVTAAVILWQA.

This sequence belongs to the complex I subunit 1 family. In terms of assembly, NDH-1 is composed of 13 different subunits. Subunits NuoA, H, J, K, L, M, N constitute the membrane sector of the complex.

It localises to the cell inner membrane. The catalysed reaction is a quinone + NADH + 5 H(+)(in) = a quinol + NAD(+) + 4 H(+)(out). In terms of biological role, NDH-1 shuttles electrons from NADH, via FMN and iron-sulfur (Fe-S) centers, to quinones in the respiratory chain. The immediate electron acceptor for the enzyme in this species is believed to be ubiquinone. Couples the redox reaction to proton translocation (for every two electrons transferred, four hydrogen ions are translocated across the cytoplasmic membrane), and thus conserves the redox energy in a proton gradient. This subunit may bind ubiquinone. The protein is NADH-quinone oxidoreductase subunit H of Citrobacter koseri (strain ATCC BAA-895 / CDC 4225-83 / SGSC4696).